A 2205-amino-acid polypeptide reads, in one-letter code: Kinesin-related protein 1 (2205 aa).

Residues 2 to 355 (NVQVAVRVRP…LRYADSAKKI (354 aa)) enclose the Kinesin motor domain. ATP is bound at residue 102–109 (GQTGSGKS). Positions 362–448 (NEDAQSKLIR…EDRMAALKDM (87 aa)) form a coiled coil. The 113-residue stretch at 483–595 (TRIGRSDSEI…LTTGNRVILG (113 aa)) folds into the FHA domain. Low complexity predominate over residues 525-548 (FMNNNNNKENSSSTTPTSSKSPSK). 4 disordered regions span residues 525-568 (FMNN…EKKL), 971-993 (SKQQ…SSKN), 1084-1226 (DNPL…TNSA), and 1455-1508 (THQQ…STIV). Residues 549-568 (PKSEKEKENNNDDDDGEKKL) are compositionally biased toward basic and acidic residues. 3 stretches are compositionally biased toward low complexity: residues 978-991 (TSSS…SSSS), 1089-1103 (SSSA…PNNS), and 1117-1142 (TPYS…QGTP). Residues 1143 to 1164 (YNPQSNNPNVISNAPPTPNSNL) show a composition bias toward polar residues. 2 stretches are compositionally biased toward low complexity: residues 1169 to 1226 (SLAA…TNSA) and 1455 to 1492 (THQQ…TSSS). The region spanning 1523 to 1616 (EDETSGYLKK…WVQTLDPLRK (94 aa)) is the PH domain. Coiled coils occupy residues 1879 to 1918 (KDES…ETSA), 1946 to 2034 (SAQV…NGMA), and 2075 to 2149 (AHQS…KKKY).

This sequence belongs to the TRAFAC class myosin-kinesin ATPase superfamily. Kinesin family. Unc-104 subfamily. In terms of assembly, homodimer.

Its subcellular location is the cytoplasm. It localises to the cytoskeleton. The protein localises to the cytoplasmic vesicle membrane. Microtubule-associated force-producing protein that plays a role in organelle transport. Its motor activity is directed toward the microtubule's plus end. Transports cytoplasmic vesicles and particularly phosphatidylinositol 4,5-bisphosphate-containing liposomes along microtubules. This chain is Kinesin-related protein 1 (kif1), found in Dictyostelium discoideum (Social amoeba).